The following is a 254-amino-acid chain: Phosphoribosylaminoimidazole-succinocarboxamide synthase (254 aa).

Belongs to the SAICAR synthetase family.

It catalyses the reaction 5-amino-1-(5-phospho-D-ribosyl)imidazole-4-carboxylate + L-aspartate + ATP = (2S)-2-[5-amino-1-(5-phospho-beta-D-ribosyl)imidazole-4-carboxamido]succinate + ADP + phosphate + 2 H(+). It participates in purine metabolism; IMP biosynthesis via de novo pathway; 5-amino-1-(5-phospho-D-ribosyl)imidazole-4-carboxamide from 5-amino-1-(5-phospho-D-ribosyl)imidazole-4-carboxylate: step 1/2. In Acidiphilium cryptum (strain JF-5), this protein is Phosphoribosylaminoimidazole-succinocarboxamide synthase.